The chain runs to 905 residues: DNA mismatch repair protein MutS (905 aa).

Positions 1 to 95 (MELSLQGSLF…PAWGHHSQLK (95 aa)) are disordered. The segment covering 38–50 (NLSDADLSKDALA) has biased composition (basic and acidic residues). ATP is bound at residue 721–728 (GPNASGKS).

This sequence belongs to the DNA mismatch repair MutS family.

In terms of biological role, this protein is involved in the repair of mismatches in DNA. It is possible that it carries out the mismatch recognition step. This protein has a weak ATPase activity. The chain is DNA mismatch repair protein MutS from Synechococcus sp. (strain CC9902).